A 232-amino-acid chain; its full sequence is Sugar fermentation stimulation protein homolog (232 aa).

The protein belongs to the SfsA family.

The protein is Sugar fermentation stimulation protein homolog of Shouchella clausii (strain KSM-K16) (Alkalihalobacillus clausii).